We begin with the raw amino-acid sequence, 613 residues long: Dihydroxy-acid dehydratase (613 aa).

Residue aspartate 81 coordinates Mg(2+). Cysteine 122 provides a ligand contact to [2Fe-2S] cluster. The Mg(2+) site is built by aspartate 123 and lysine 124. Lysine 124 carries the N6-carboxylysine modification. A [2Fe-2S] cluster-binding site is contributed by cysteine 193. Glutamate 489 contributes to the Mg(2+) binding site. The active-site Proton acceptor is serine 515.

The protein belongs to the IlvD/Edd family. As to quaternary structure, homodimer. [2Fe-2S] cluster is required as a cofactor. The cofactor is Mg(2+).

It catalyses the reaction (2R)-2,3-dihydroxy-3-methylbutanoate = 3-methyl-2-oxobutanoate + H2O. The enzyme catalyses (2R,3R)-2,3-dihydroxy-3-methylpentanoate = (S)-3-methyl-2-oxopentanoate + H2O. Its pathway is amino-acid biosynthesis; L-isoleucine biosynthesis; L-isoleucine from 2-oxobutanoate: step 3/4. The protein operates within amino-acid biosynthesis; L-valine biosynthesis; L-valine from pyruvate: step 3/4. Functionally, functions in the biosynthesis of branched-chain amino acids. Catalyzes the dehydration of (2R,3R)-2,3-dihydroxy-3-methylpentanoate (2,3-dihydroxy-3-methylvalerate) into 2-oxo-3-methylpentanoate (2-oxo-3-methylvalerate) and of (2R)-2,3-dihydroxy-3-methylbutanoate (2,3-dihydroxyisovalerate) into 2-oxo-3-methylbutanoate (2-oxoisovalerate), the penultimate precursor to L-isoleucine and L-valine, respectively. This chain is Dihydroxy-acid dehydratase, found in Pseudomonas fluorescens (strain SBW25).